An 82-amino-acid chain; its full sequence is Small ribosomal subunit protein bS18 (82 aa).

The disordered stretch occupies residues 1 to 20; it reads MSETSSAPVRRPFHRRRKTC.

The protein belongs to the bacterial ribosomal protein bS18 family. Part of the 30S ribosomal subunit. Forms a tight heterodimer with protein bS6.

Functionally, binds as a heterodimer with protein bS6 to the central domain of the 16S rRNA, where it helps stabilize the platform of the 30S subunit. This Rhizobium johnstonii (strain DSM 114642 / LMG 32736 / 3841) (Rhizobium leguminosarum bv. viciae) protein is Small ribosomal subunit protein bS18.